The primary structure comprises 601 residues: Sulfite reductase [NADPH] flavoprotein alpha-component (601 aa).

Residues 64-202 form the Flavodoxin-like domain; that stretch reads ITLISASQTG…AAAEWRARIV (139 aa). FMN contacts are provided by residues 70 to 75, 117 to 120, and 153 to 162; these read SQTGNA, STQG, and LGDTSYEFFC. Residues 236-450 enclose the FAD-binding FR-type domain; that stretch reads EEPLVASLSV…IEHNDNFRLP (215 aa). Residues T324, A358, 388–391, 406–408, and 421–424 each bind FAD; these read RLYS, TVG, and GGAS. NADP(+)-binding positions include 521-522, 527-531, and D563; these read SR and KIYVQ. Position 601 (Y601) interacts with FAD.

Belongs to the NADPH-dependent sulphite reductase flavoprotein subunit CysJ family. This sequence in the N-terminal section; belongs to the flavodoxin family. It in the C-terminal section; belongs to the flavoprotein pyridine nucleotide cytochrome reductase family. In terms of assembly, alpha(8)-beta(8). The alpha component is a flavoprotein, the beta component is a hemoprotein. FAD serves as cofactor. FMN is required as a cofactor.

It carries out the reaction hydrogen sulfide + 3 NADP(+) + 3 H2O = sulfite + 3 NADPH + 4 H(+). Its pathway is sulfur metabolism; hydrogen sulfide biosynthesis; hydrogen sulfide from sulfite (NADPH route): step 1/1. Its function is as follows. Component of the sulfite reductase complex that catalyzes the 6-electron reduction of sulfite to sulfide. This is one of several activities required for the biosynthesis of L-cysteine from sulfate. The flavoprotein component catalyzes the electron flow from NADPH -&gt; FAD -&gt; FMN to the hemoprotein component. This is Sulfite reductase [NADPH] flavoprotein alpha-component from Enterobacter sp. (strain 638).